A 208-amino-acid chain; its full sequence is Large ribosomal subunit protein uL4 (208 aa).

Positions 45–85 (RQGTHKAKTRAQVRGGGRKPYRQKGTGNARQGSTRSPLMIG) are disordered. Residues 46 to 66 (QGTHKAKTRAQVRGGGRKPYR) are compositionally biased toward basic residues. Polar residues predominate over residues 69-80 (GTGNARQGSTRS).

This sequence belongs to the universal ribosomal protein uL4 family. As to quaternary structure, part of the 50S ribosomal subunit.

One of the primary rRNA binding proteins, this protein initially binds near the 5'-end of the 23S rRNA. It is important during the early stages of 50S assembly. It makes multiple contacts with different domains of the 23S rRNA in the assembled 50S subunit and ribosome. Functionally, forms part of the polypeptide exit tunnel. The protein is Large ribosomal subunit protein uL4 of Chlorobium phaeobacteroides (strain DSM 266 / SMG 266 / 2430).